We begin with the raw amino-acid sequence, 274 residues long: tRNA-cytidine(32) 2-sulfurtransferase (274 aa).

A PP-loop motif motif is present at residues 40–45 (SGGKDS). Positions 115, 118, and 206 each coordinate [4Fe-4S] cluster.

It belongs to the TtcA family. As to quaternary structure, homodimer. The cofactor is Mg(2+). Requires [4Fe-4S] cluster as cofactor.

The protein resides in the cytoplasm. The enzyme catalyses cytidine(32) in tRNA + S-sulfanyl-L-cysteinyl-[cysteine desulfurase] + AH2 + ATP = 2-thiocytidine(32) in tRNA + L-cysteinyl-[cysteine desulfurase] + A + AMP + diphosphate + H(+). Its pathway is tRNA modification. Its function is as follows. Catalyzes the ATP-dependent 2-thiolation of cytidine in position 32 of tRNA, to form 2-thiocytidine (s(2)C32). The sulfur atoms are provided by the cysteine/cysteine desulfurase (IscS) system. In Pseudomonas putida (strain ATCC 700007 / DSM 6899 / JCM 31910 / BCRC 17059 / LMG 24140 / F1), this protein is tRNA-cytidine(32) 2-sulfurtransferase.